The primary structure comprises 184 residues: ATP synthase subunit delta (184 aa).

It belongs to the ATPase delta chain family. F-type ATPases have 2 components, F(1) - the catalytic core - and F(0) - the membrane proton channel. F(1) has five subunits: alpha(3), beta(3), gamma(1), delta(1), epsilon(1). F(0) has three main subunits: a(1), b(2) and c(10-14). The alpha and beta chains form an alternating ring which encloses part of the gamma chain. F(1) is attached to F(0) by a central stalk formed by the gamma and epsilon chains, while a peripheral stalk is formed by the delta and b chains.

The protein resides in the cell inner membrane. Functionally, f(1)F(0) ATP synthase produces ATP from ADP in the presence of a proton or sodium gradient. F-type ATPases consist of two structural domains, F(1) containing the extramembraneous catalytic core and F(0) containing the membrane proton channel, linked together by a central stalk and a peripheral stalk. During catalysis, ATP synthesis in the catalytic domain of F(1) is coupled via a rotary mechanism of the central stalk subunits to proton translocation. This protein is part of the stalk that links CF(0) to CF(1). It either transmits conformational changes from CF(0) to CF(1) or is implicated in proton conduction. This chain is ATP synthase subunit delta, found in Caulobacter sp. (strain K31).